The chain runs to 190 residues: Elongation factor P-like protein (190 aa).

Belongs to the elongation factor P family.

The sequence is that of Elongation factor P-like protein from Yersinia pestis bv. Antiqua (strain Antiqua).